A 202-amino-acid chain; its full sequence is Holliday junction branch migration complex subunit RuvA (202 aa).

The domain I stretch occupies residues 1–65 (MIAYVEGRVA…EDALELFGFS (65 aa)). The interval 66 to 144 (TWDERQTFMV…VEDLPAGLVL (79 aa)) is domain II. The interval 145–155 (AGGAAPGGVFR) is flexible linker. The domain III stretch occupies residues 155 to 202 (RDALAGLGNLGYLEDEAAPVLKEVLKAEPDLDVAGALRAALKALARGR).

It belongs to the RuvA family. In terms of assembly, homotetramer. Forms an RuvA(8)-RuvB(12)-Holliday junction (HJ) complex. HJ DNA is sandwiched between 2 RuvA tetramers; dsDNA enters through RuvA and exits via RuvB. An RuvB hexamer assembles on each DNA strand where it exits the tetramer. Each RuvB hexamer is contacted by two RuvA subunits (via domain III) on 2 adjacent RuvB subunits; this complex drives branch migration. In the full resolvosome a probable DNA-RuvA(4)-RuvB(12)-RuvC(2) complex forms which resolves the HJ.

It is found in the cytoplasm. Functionally, the RuvA-RuvB-RuvC complex processes Holliday junction (HJ) DNA during genetic recombination and DNA repair, while the RuvA-RuvB complex plays an important role in the rescue of blocked DNA replication forks via replication fork reversal (RFR). RuvA specifically binds to HJ cruciform DNA, conferring on it an open structure. The RuvB hexamer acts as an ATP-dependent pump, pulling dsDNA into and through the RuvAB complex. HJ branch migration allows RuvC to scan DNA until it finds its consensus sequence, where it cleaves and resolves the cruciform DNA. The sequence is that of Holliday junction branch migration complex subunit RuvA from Nitratidesulfovibrio vulgaris (strain DSM 19637 / Miyazaki F) (Desulfovibrio vulgaris).